We begin with the raw amino-acid sequence, 505 residues long: ATP synthase subunit alpha, chloroplastic (505 aa).

ATP is bound at residue 172 to 179 (GDRQTGKT).

The protein belongs to the ATPase alpha/beta chains family. As to quaternary structure, F-type ATPases have 2 components, CF(1) - the catalytic core - and CF(0) - the membrane proton channel. CF(1) has five subunits: alpha(3), beta(3), gamma(1), delta(1), epsilon(1). CF(0) has four main subunits: a, b, b' and c.

Its subcellular location is the plastid. The protein localises to the chloroplast thylakoid membrane. The catalysed reaction is ATP + H2O + 4 H(+)(in) = ADP + phosphate + 5 H(+)(out). In terms of biological role, produces ATP from ADP in the presence of a proton gradient across the membrane. The alpha chain is a regulatory subunit. The polypeptide is ATP synthase subunit alpha, chloroplastic (Antithamnion sp. (Red alga)).